The sequence spans 370 residues: uncharacterized protein (370 aa).

An N6-(pyridoxal phosphate)lysine modification is found at Lys-207.

It belongs to the class-V pyridoxal-phosphate-dependent aminotransferase family. The cofactor is pyridoxal 5'-phosphate.

This is an uncharacterized protein from Bacillus subtilis (strain 168).